Consider the following 386-residue polypeptide: Succinate--CoA ligase [ADP-forming] subunit beta (386 aa).

The 236-residue stretch at 9-244 folds into the ATP-grasp domain; that stretch reads KEILRKYGVP…HDEEDPLETR (236 aa). ATP is bound by residues Lys46, 53-55, Glu99, Cys102, and Glu107; that span reads GRG. 2 residues coordinate Mg(2+): Asn199 and Asp213. Substrate-binding positions include Asn264 and 321-323; that span reads GIM.

This sequence belongs to the succinate/malate CoA ligase beta subunit family. Heterotetramer of two alpha and two beta subunits. The cofactor is Mg(2+).

The enzyme catalyses succinate + ATP + CoA = succinyl-CoA + ADP + phosphate. The catalysed reaction is GTP + succinate + CoA = succinyl-CoA + GDP + phosphate. It functions in the pathway carbohydrate metabolism; tricarboxylic acid cycle; succinate from succinyl-CoA (ligase route): step 1/1. Succinyl-CoA synthetase functions in the citric acid cycle (TCA), coupling the hydrolysis of succinyl-CoA to the synthesis of either ATP or GTP and thus represents the only step of substrate-level phosphorylation in the TCA. The beta subunit provides nucleotide specificity of the enzyme and binds the substrate succinate, while the binding sites for coenzyme A and phosphate are found in the alpha subunit. The sequence is that of Succinate--CoA ligase [ADP-forming] subunit beta from Rickettsia rickettsii (strain Iowa).